Here is a 154-residue protein sequence, read N- to C-terminus: MVLSEGEWQLVLHVWAKVEADIAGHGQDILIRLFKHHPETLEKFDRFKHLKSEAEMKASEDLKKHGVTVLTALGAILKKKGHHEAELKPLAQSHATKHKIPIKYLEFISEAIIHVLHSRHPADFGADAQGAMSKALELFRKDIAAKYKELGYQG.

Positions 2–148 (VLSEGEWQLV…FRKDIAAKYK (147 aa)) constitute a Globin domain. A Phosphoserine modification is found at Ser-4. A nitrite-binding site is contributed by His-65. Position 65 (His-65) interacts with O2. The residue at position 68 (Thr-68) is a Phosphothreonine. His-94 serves as a coordination point for heme b.

This sequence belongs to the globin family. Monomeric.

It is found in the cytoplasm. Its subcellular location is the sarcoplasm. The catalysed reaction is Fe(III)-heme b-[protein] + nitric oxide + H2O = Fe(II)-heme b-[protein] + nitrite + 2 H(+). It carries out the reaction H2O2 + AH2 = A + 2 H2O. In terms of biological role, monomeric heme protein which primary function is to store oxygen and facilitate its diffusion within muscle tissues. Reversibly binds oxygen through a pentacoordinated heme iron and enables its timely and efficient release as needed during periods of heightened demand. Depending on the oxidative conditions of tissues and cells, and in addition to its ability to bind oxygen, it also has a nitrite reductase activity whereby it regulates the production of bioactive nitric oxide. Under stress conditions, like hypoxia and anoxia, it also protects cells against reactive oxygen species thanks to its pseudoperoxidase activity. The protein is Myoglobin (MB) of Kogia breviceps (Pygmy sperm whale).